Reading from the N-terminus, the 180-residue chain is Ribosome maturation factor RimM (180 aa).

The 74-residue stretch at 103 to 176 (GDIWWDRDLV…RIVVDPPPGL (74 aa)) folds into the PRC barrel domain.

Belongs to the RimM family. Binds ribosomal protein uS19.

Its subcellular location is the cytoplasm. In terms of biological role, an accessory protein needed during the final step in the assembly of 30S ribosomal subunit, possibly for assembly of the head region. Essential for efficient processing of 16S rRNA. May be needed both before and after RbfA during the maturation of 16S rRNA. It has affinity for free ribosomal 30S subunits but not for 70S ribosomes. This is Ribosome maturation factor RimM from Frankia alni (strain DSM 45986 / CECT 9034 / ACN14a).